Consider the following 469-residue polypeptide: UDP-N-acetylmuramate--L-alanine ligase (469 aa).

118 to 124 provides a ligand contact to ATP; sequence GTHGKTT.

This sequence belongs to the MurCDEF family.

Its subcellular location is the cytoplasm. The enzyme catalyses UDP-N-acetyl-alpha-D-muramate + L-alanine + ATP = UDP-N-acetyl-alpha-D-muramoyl-L-alanine + ADP + phosphate + H(+). Its pathway is cell wall biogenesis; peptidoglycan biosynthesis. In terms of biological role, cell wall formation. The sequence is that of UDP-N-acetylmuramate--L-alanine ligase from Ruegeria sp. (strain TM1040) (Silicibacter sp.).